The chain runs to 874 residues: Protein translocase subunit SecA (874 aa).

Residues Q85, 103–107, and D492 contribute to the ATP site; that span reads GEGKT. Basic and acidic residues predominate over residues 839–854; sequence EEGPKKPYRREQKIGR. Positions 839 to 864 are disordered; the sequence is EEGPKKPYRREQKIGRNDPCPCGSGK. Zn(2+) is bound by residues C858, C860, C869, and C870.

The protein belongs to the SecA family. In terms of assembly, monomer and homodimer. Part of the essential Sec protein translocation apparatus which comprises SecA, SecYEG and auxiliary proteins SecDF. Other proteins may also be involved. Requires Zn(2+) as cofactor.

The protein resides in the cell membrane. Its subcellular location is the cytoplasm. It carries out the reaction ATP + H2O + cellular proteinSide 1 = ADP + phosphate + cellular proteinSide 2.. Its function is as follows. Part of the Sec protein translocase complex. Interacts with the SecYEG preprotein conducting channel. Has a central role in coupling the hydrolysis of ATP to the transfer of proteins into and across the cell membrane, serving as an ATP-driven molecular motor driving the stepwise translocation of polypeptide chains across the membrane. In Carboxydothermus hydrogenoformans (strain ATCC BAA-161 / DSM 6008 / Z-2901), this protein is Protein translocase subunit SecA.